The sequence spans 342 residues: Tetraacyldisaccharide 4'-kinase (342 aa).

68-75 is a binding site for ATP; it reads TVGGTGKT.

It belongs to the LpxK family.

The enzyme catalyses a lipid A disaccharide + ATP = a lipid IVA + ADP + H(+). It functions in the pathway glycolipid biosynthesis; lipid IV(A) biosynthesis; lipid IV(A) from (3R)-3-hydroxytetradecanoyl-[acyl-carrier-protein] and UDP-N-acetyl-alpha-D-glucosamine: step 6/6. Transfers the gamma-phosphate of ATP to the 4'-position of a tetraacyldisaccharide 1-phosphate intermediate (termed DS-1-P) to form tetraacyldisaccharide 1,4'-bis-phosphate (lipid IVA). This Burkholderia ambifaria (strain ATCC BAA-244 / DSM 16087 / CCUG 44356 / LMG 19182 / AMMD) (Burkholderia cepacia (strain AMMD)) protein is Tetraacyldisaccharide 4'-kinase.